We begin with the raw amino-acid sequence, 371 residues long: Gamma-tocopherol methyltransferase, chloroplastic (371 aa).

A chloroplast-targeting transit peptide spans methionine 1–glutamine 65. The segment at isoleucine 153 to glycine 162 is SAM motif I. The SAM motif II stretch occupies residues glycine 216–methionine 224. An SAM motif III region spans residues valine 243–isoleucine 252.

The protein belongs to the class I-like SAM-binding methyltransferase superfamily. gTMT family. In terms of assembly, homodimer.

The protein resides in the plastid. It localises to the chloroplast inner membrane. The catalysed reaction is picrinine + S-adenosyl-L-methionine = ervincine + S-adenosyl-L-homocysteine + H(+). Its pathway is alkaloid biosynthesis; vindoline biosynthesis. In terms of biological role, S-adenosyl-L-methionine-dependent N-methyltransferase involved in the biosynthesis of biologically active monoterpenoid indole alkaloids (MIAs) natural products including vindoline. Inactive with picrinine as substrate. In Catharanthus roseus (Madagascar periwinkle), this protein is Gamma-tocopherol methyltransferase, chloroplastic.